We begin with the raw amino-acid sequence, 332 residues long: DNA repair and recombination protein RadA (332 aa).

126-133 is a binding site for ATP; sequence GEFGSGKT.

This sequence belongs to the eukaryotic RecA-like protein family.

In terms of biological role, involved in DNA repair and in homologous recombination. Binds and assemble on single-stranded DNA to form a nucleoprotein filament. Hydrolyzes ATP in a ssDNA-dependent manner and promotes DNA strand exchange between homologous DNA molecules. This is DNA repair and recombination protein RadA from Pyrobaculum calidifontis (strain DSM 21063 / JCM 11548 / VA1).